We begin with the raw amino-acid sequence, 367 residues long: MDIQMFTTLNSTVPTEPVVGPVEPTVPTVPATKETGPSSSAECSTQPAVAEQEDNSLLAQLLKGKITSDDAKLQPPRGPFEYAPMLSEEAQFAIKLAGLLNPNPVTEQDPSTFKPPPKMSNNVRKNINLTPVIENAVPSGFELESPKDQAFDVVHGRLSMGQNQTCYFVTVEEMRRRLQSPEKLNSSSIACNLKRPKLKNGGELMRAQLRDHGIKVQLNAKQKAFPNKVIALVEAEAVHLGLDLGTAVRDDYPVQDIIQEVAHEALADEDADLDALMNDKDFTECMSALESVFTSVVPPITGIEPKPSNNMRLNNGMETFSSASHGLGIVSQRVWLPQLTAIGNGVASELRRLTETPTESKPEELKA.

Residues 29-49 form a disordered region; that stretch reads VPATKETGPSSSAECSTQPAV. Residues 36 to 47 show a composition bias toward polar residues; it reads GPSSSAECSTQP. The interval 220–354 is H-S-H (helix-span-helix), dimerization; that stretch reads AKQKAFPNKV…GVASELRRLT (135 aa).

Belongs to the AP-2 family. As to quaternary structure, binds DNA as a dimer.

It localises to the nucleus. The protein resides in the cytoplasm. Its function is as follows. Sequence-specific DNA-binding protein that interacts with enhancer elements to regulate transcription of selected genes. Required for neuroblast and epidermal morphogenesis, perhaps acting in cooperation with transcription factor aptf-4. This is Transcription factor aptf-2 from Caenorhabditis elegans.